The chain runs to 558 residues: REST corepressor spr-1 (558 aa).

Residues 1 to 106 (MDLYDDDGES…KVKGPLSNTN (106 aa)) form a disordered region. Residues 36–56 (TIEENVPEVEENTLLEEDSLV) show a composition bias toward acidic residues. The segment covering 69-80 (KPSKSKRKRKRS) has biased composition (basic residues). An ELM2 domain is found at 107 to 192 (KEINVGTEFQ…SAIAEVARRN (86 aa)). The 52-residue stretch at 193 to 244 (ELKDVWTDQEITLFENCYQIFGKNFSQIRSALCHRSLQSIVQFYYESKKRVK) folds into the SANT 1 domain. The segment at 271-325 (AIFESMCDNCGEKAENMQINNAMNRPECRACLIYFNQTGVPRPTSLRLVLAERIR) adopts a GATA-type zinc-finger fold. Over residues 378-402 (CTENGNVGETSSPSAQKTEIQSESD) the composition is skewed to polar residues. The tract at residues 378–406 (CTENGNVGETSSPSAQKTEIQSESDGSGP) is disordered. Residues 481–532 (HYSQDWTQLERSQVIRCFNMYGAHFEHIADVIGTKTPDQVYQFYLENQKAID) form the SANT 2 domain.

It belongs to the CoREST family. As to quaternary structure, probably part of a large repressor complex. Interacts with histone demethylase spr-5/lsd-1.

It is found in the nucleus. In terms of biological role, probable corepressor protein, which probably participates in the transcriptional repression of the presenilin protein hop-1. Probably acts via the formation of a multiprotein complex that deacetylates and demethylates specific sites on histones. Acts redundantly with the transcriptional repressor lin-35 to play a role in vulval morphogenesis and promote germline proliferation. This chain is REST corepressor spr-1, found in Caenorhabditis elegans.